The primary structure comprises 433 residues: Pyrimidine-nucleoside phosphorylase (433 aa).

81 to 83 (KHS) contacts phosphate. The K(+) site is built by G88 and T90. Residues T92, 108 to 110 (KMS), and T120 each bind phosphate. Substrate contacts are provided by R168 and K187. Residues L243, A246, and E255 each contribute to the K(+) site.

This sequence belongs to the thymidine/pyrimidine-nucleoside phosphorylase family. Homodimer. Requires K(+) as cofactor.

The enzyme catalyses uridine + phosphate = alpha-D-ribose 1-phosphate + uracil. The catalysed reaction is thymidine + phosphate = 2-deoxy-alpha-D-ribose 1-phosphate + thymine. It carries out the reaction 2'-deoxyuridine + phosphate = 2-deoxy-alpha-D-ribose 1-phosphate + uracil. Functionally, catalyzes phosphorolysis of the pyrimidine nucleosides uridine, thymidine and 2'-deoxyuridine with the formation of the corresponding pyrimidine base and ribose-1-phosphate. The protein is Pyrimidine-nucleoside phosphorylase (pdp) of Staphylococcus haemolyticus (strain JCSC1435).